The sequence spans 89 residues: Small ribosomal subunit protein uS14 (89 aa).

The protein belongs to the universal ribosomal protein uS14 family. Part of the 30S ribosomal subunit. Contacts proteins S3 and S10.

In terms of biological role, binds 16S rRNA, required for the assembly of 30S particles and may also be responsible for determining the conformation of the 16S rRNA at the A site. The sequence is that of Small ribosomal subunit protein uS14 from Acholeplasma laidlawii (strain PG-8A).